The primary structure comprises 160 residues: V-type proton ATPase subunit c (160 aa).

Over 1–8 the chain is Vacuolar; it reads MTELCPVY. A helical transmembrane segment spans residues 9-31; it reads APFFGAIGCASAIIFTSLGAAYG. Over 32-53 the chain is Cytoplasmic; sequence TAKSGVGICATCVLRPDLLFKN. The helical transmembrane segment at 54–74 threads the bilayer; it reads IVPVIMAGIIAIYGLVVSVLV. At 75 to 90 the chain is on the vacuolar side; the sequence is CYSLGQKQALYTGFIQ. The chain crosses the membrane as a helical span at residues 91–112; the sequence is LGAGLSVGLSGLAAGFAIGIVG. Topologically, residues 113–124 are cytoplasmic; that stretch reads DAGVRGSSQQPR. The chain crosses the membrane as a helical span at residues 125 to 150; that stretch reads LFVGMILILIFAEVLGLYGLIVALLL. Residues 151-160 are Vacuolar-facing; the sequence is NSRATQDVVC.

It belongs to the V-ATPase proteolipid subunit family. As to quaternary structure, V-ATPase is a heteromultimeric enzyme composed of a peripheral catalytic V1 complex (components A to H) attached to an integral membrane V0 proton pore complex (components: a, c, c', c'', d, e, f and VOA1). The decameric c-ring forms the proton-conducting pore, and is composed of eight proteolipid subunits c, one subunit c' and one subunit c''.

The protein localises to the vacuole membrane. Proton-conducting pore forming subunit of the V0 complex of vacuolar(H+)-ATPase (V-ATPase), a multisubunit enzyme composed of a peripheral complex (V1) that hydrolyzes ATP and a membrane integral complex (V0) that translocates protons. V-ATPase is responsible for acidifying and maintaining the pH of intracellular compartments. The protein is V-type proton ATPase subunit c (VMA3) of Saccharomyces cerevisiae (strain ATCC 204508 / S288c) (Baker's yeast).